Here is a 212-residue protein sequence, read N- to C-terminus: Acyl-homoserine-lactone synthase (212 aa).

The protein belongs to the autoinducer synthase family.

It catalyses the reaction a fatty acyl-[ACP] + S-adenosyl-L-methionine = an N-acyl-L-homoserine lactone + S-methyl-5'-thioadenosine + holo-[ACP] + H(+). In terms of biological role, required for the synthesis of OHHL (N-(3-oxohexanoyl)-L-homoserine lactone), an autoinducer molecule which binds to the EchR transcriptional regulator. This chain is Acyl-homoserine-lactone synthase (echI), found in Dickeya chrysanthemi (Pectobacterium chrysanthemi).